The sequence spans 405 residues: S-adenosylmethionine sensor upstream of mTORC1 (405 aa).

Positions 1 to 34 (MEPGAGGRNTARAQRAGSPNTPPPREQERKLEQE) are disordered. Over residues 25–34 (REQERKLEQE) the composition is skewed to basic and acidic residues. Residues arginine 95, glycine 172, aspartate 190, aspartate 202, phenylalanine 203, and serine 244 each coordinate S-adenosyl-L-methionine.

Belongs to the BMT2/SAMTOR family. Interacts with the DEPDC5 subunit of the GATOR1 complex; interaction is disrupted when SAMTOR binds S-adenosyl-L-methionine. Interacts with the KICSTOR complex; interaction is disrupted when SAMTOR binds S-adenosyl-L-methionine.

Functionally, S-adenosyl-L-methionine-binding protein that acts as an inhibitor of mTORC1 signaling via interaction with the GATOR1 and KICSTOR complexes. Acts as a sensor of S-adenosyl-L-methionine to signal methionine sufficiency to mTORC1: in presence of methionine, binds S-adenosyl-L-methionine, leading to disrupt interaction with the GATOR1 and KICSTOR complexes and promote mTORC1 signaling. Upon methionine starvation, S-adenosyl-L-methionine levels are reduced, thereby promoting the association with GATOR1 and KICSTOR, leading to inhibit mTORC1 signaling. Probably also acts as a S-adenosyl-L-methionine-dependent methyltransferase (Potential). The polypeptide is S-adenosylmethionine sensor upstream of mTORC1 (Homo sapiens (Human)).